The primary structure comprises 234 residues: Proteasome subunit alpha type-6 (234 aa).

At Ser-14 the chain carries Phosphoserine. A Glycyl lysine isopeptide (Lys-Gly) (interchain with G-Cter in ubiquitin) cross-link involves residue Lys-191.

It belongs to the peptidase T1A family. The 26S proteasome consists of a 20S proteasome core and two 19S regulatory subunits. The 20S proteasome core is composed of 28 subunits that are arranged in four stacked rings, resulting in a barrel-shaped structure. The two end rings are each formed by seven alpha subunits, and the two central rings are each formed by seven beta subunits. The catalytic chamber with the active sites is on the inside of the barrel.

Its subcellular location is the cytoplasm. It localises to the nucleus. The proteasome degrades poly-ubiquitinated proteins in the cytoplasm and in the nucleus. It is essential for the regulated turnover of proteins and for the removal of misfolded proteins. The proteasome is a multicatalytic proteinase complex that is characterized by its ability to cleave peptides with Arg, Phe, Tyr, Leu, and Glu adjacent to the leaving group at neutral or slightly basic pH. It has an ATP-dependent proteolytic activity. The chain is Proteasome subunit alpha type-6 (PRE5) from Saccharomyces cerevisiae (strain ATCC 204508 / S288c) (Baker's yeast).